The following is a 1450-amino-acid chain: Phospholipase B1, membrane-associated (1450 aa).

The N-terminal stretch at 1 to 27 (MESWPGVSLVGLLLLLLLGQGPSQIHG) is a signal peptide. Residues 28-1422 (SSGENTSQPQ…KAKENSNTLY (1395 aa)) lie on the Extracellular side of the membrane. N-linked (GlcNAc...) asparagine glycans are attached at residues Asn32, Asn45, and Asn179. A run of 3 repeats spans residues 41 to 351 (RTLK…YRNS), 366 to 711 (MKEG…TKNS), and 712 to 1058 (NLGH…FRNS). Residues 41–1407 (RTLKNFSFPC…NPFLYTVRNS (1367 aa)) form a 4 X 308-326 AA approximate repeats region. Catalysis depends on residues Ser404, Asp518, and His659. N-linked (GlcNAc...) asparagine glycosylation is present at Asn699. Polar residues predominate over residues 708–720 (TKNSNLGHGTSMS). Residues 708–734 (TKNSNLGHGTSMSCEEKAPSASPPTSV) are disordered. N-linked (GlcNAc...) asparagine glycosylation is found at Asn787, Asn801, Asn844, Asn880, Asn926, Asn1059, Asn1226, Asn1280, Asn1383, and Asn1387. Copy 4 of the repeat occupies 1068 to 1407 (IENWGSDFLC…NPFLYTVRNS (340 aa)). The interval 1408–1450 (QILLDKAKENSNTLYWAVPVAAVGGLVVGILGMMLWRTVRLVQ) is necessary for membrane localization. Residues 1423 to 1443 (WAVPVAAVGGLVVGILGMMLW) form a helical membrane-spanning segment. Residues 1444 to 1450 (RTVRLVQ) lie on the Cytoplasmic side of the membrane.

The protein belongs to the 'GDSL' lipolytic enzyme family. Phospholipase B1 subfamily. In terms of processing, undergoes proteolytic cleavage in the ileum. In terms of tissue distribution, expressed in the ileum mucosa, Paneth cells spermatocytes, spermatids and sperm (at protein level). Expressed in the ileum, jejunum, esophagus and testis.

Its subcellular location is the apical cell membrane. The enzyme catalyses a 1,2-diacyl-sn-glycero-3-phosphocholine + H2O = a 1-acyl-sn-glycero-3-phosphocholine + a fatty acid + H(+). The catalysed reaction is a 1-O-alkyl-2-acyl-sn-glycero-3-phosphocholine + H2O = a 1-O-alkyl-sn-glycero-3-phosphocholine + a fatty acid + H(+). It carries out the reaction a 1-acyl-sn-glycero-3-phosphocholine + H2O = sn-glycerol 3-phosphocholine + a fatty acid + H(+). It catalyses the reaction a triacylglycerol + H2O = a diacylglycerol + a fatty acid + H(+). The enzyme catalyses 1,2-dihexadecanoyl-sn-glycero-3-phosphocholine + H2O = 1-hexadecanoyl-sn-glycero-3-phosphocholine + hexadecanoate + H(+). The catalysed reaction is 1-hexadecanoyl-2-(9Z-octadecenoyl)-sn-glycero-3-phosphocholine + H2O = 1-hexadecanoyl-sn-glycero-3-phosphocholine + (9Z)-octadecenoate + H(+). It carries out the reaction 1,2-di-(9Z-octadecenoyl)-sn-glycero-3-phosphocholine + H2O = 1-(9Z-octadecenoyl)-sn-glycero-3-phosphocholine + (9Z)-octadecenoate + H(+). It catalyses the reaction 1-hexadecanoyl-2-(9Z,12Z-octadecadienoyl)-sn-glycero-3-phosphocholine + H2O = (9Z,12Z)-octadecadienoate + 1-hexadecanoyl-sn-glycero-3-phosphocholine + H(+). The enzyme catalyses 1-hexadecanoyl-2-(9Z,12Z-octadecadienoyl)-sn-glycero-3-phosphocholine + H2O = 2-(9Z,12Z-octadecadienoyl)-sn-glycero-3-phosphocholine + hexadecanoate + H(+). The catalysed reaction is 1-hexadecanoyl-2-(9Z-octadecenoyl)-sn-glycero-3-phosphoethanolamine + H2O = 1-hexadecanoyl-sn-glycero-3-phosphoethanolamine + (9Z)-octadecenoate + H(+). It carries out the reaction 1-hexadecanoyl-2-(9Z-octadecenoyl)-sn-glycero-3-phospho-(1'-sn-glycerol) + H2O = 1-hexadecanoyl-sn-glycero-3-phospho-(1'-sn-glycerol) + (9Z)-octadecenoate + H(+). It catalyses the reaction 1,2-dihexadecanoyl-sn-glycero-3-phosphocholine + 2 H2O = sn-glycerol 3-phosphocholine + 2 hexadecanoate + 2 H(+). The enzyme catalyses 1-O-hexadecyl-2-(9Z)-octadecenoyl-sn-glycero-3-phosphocholine + H2O = 1-O-hexadecyl-sn-glycero-3-phosphocholine + (9Z)-octadecenoate + H(+). The catalysed reaction is 1-hexadecanoyl-sn-glycero-3-phosphocholine + H2O = sn-glycerol 3-phosphocholine + hexadecanoate + H(+). It carries out the reaction 1,2,3-tri-(9Z-octadecenoyl)-glycerol + H2O = di-(9Z)-octadecenoylglycerol + (9Z)-octadecenoate + H(+). It catalyses the reaction 1-hexadecanoyl-2-(9Z)-octadecenoyl-3-octadecanoyl-sn-glycerol + H2O = 1-hexadecanoyl-2-(9Z-octadecenoyl)-sn-glycerol + octadecanoate + H(+). The enzyme catalyses 1,3-dihexadecanoyl-2-(9Z-octadecenoyl)glycerol + H2O = 1,3-dihexadecanoylglycerol + (9Z)-octadecenoate + H(+). The catalysed reaction is 1,3-dihexadecanoyl-2-(9Z-octadecenoyl)glycerol + H2O = 1-hexadecanoyl-2-(9Z-octadecenoyl)-glycerol + hexadecanoate + H(+). It carries out the reaction 1-hexadecanoyl-2-(9Z)-octadecenoyl-3-octadecanoyl-sn-glycerol + H2O = 1-hexadecanoyl-3-octadecanoyl-sn-glycerol + (9Z)-octadecenoate + H(+). It catalyses the reaction 1-hexadecanoyl-2-(9Z)-octadecenoyl-3-octadecanoyl-sn-glycerol + H2O = 2-(9Z-octadecenoyl)-3-octadecanoyl-sn-glycerol + hexadecanoate + H(+). The enzyme catalyses 1-octadecanoyl-2-(9Z,12Z)-octadecadienoyl-sn-glycerol + H2O = 1-octadecanoyl-sn-glycerol + (9Z,12Z)-octadecadienoate + H(+). The catalysed reaction is 1,2-di-(9Z-octadecenoyl)-sn-glycerol + H2O = 1-(9Z-octadecenoyl)-sn-glycerol + (9Z)-octadecenoate + H(+). It carries out the reaction 2,3-di-(9Z)-octadecenoyl-sn-glycerol + H2O = 3-(9Z-octadecenoyl)-sn-glycerol + (9Z)-octadecenoate + H(+). It catalyses the reaction 1,3-di-(9Z-octadecenoyl)-glycerol + H2O = 1-(9Z-octadecenoyl)-glycerol + (9Z)-octadecenoate + H(+). The enzyme catalyses 1-(9Z-octadecenoyl)-glycerol + H2O = glycerol + (9Z)-octadecenoate + H(+). The catalysed reaction is 2-(9Z-octadecenoyl)-glycerol + H2O = glycerol + (9Z)-octadecenoate + H(+). Its activity is regulated as follows. Up-regulated by bile acids such as deoxycholate. Inhibited by diisopropyl fluorophosphate. In terms of biological role, calcium-independent membrane-associated phospholipase that catalyzes complete diacylation of phospholipids by hydrolyzing both sn-1 and sn-2 fatty acyl chains attached to the glycerol backbone (phospholipase B activity). Has dual phospholipase and lysophospholipase activities toward diacylphospholipids. Preferentially cleaves sn-2 ester bonds over sn-1 bonds. Acts as a lipase toward glycerolipid substrates. Hydrolyzes fatty acyl chains of diacylglycerols with preference for the sn-2 position and of triacylglycerols with not positional selectivity. May also hydrolyze long chain retinyl esters such as retinyl palmitate. May contribute to digestion of dietary phospholipids, glycerolipids and retinoids, facilitating lipid absorption at the brush border. This chain is Phospholipase B1, membrane-associated (Plb1), found in Rattus norvegicus (Rat).